The sequence spans 129 residues: Profilin-4 (129 aa).

This sequence belongs to the profilin family. In terms of tissue distribution, expressed in testis, in germ cells in seminiferous tubules (at protein level).

It localises to the cytoplasm. Its function is as follows. Involved in male fertility. Required for manchette development and acrosome biogenesis during spermiogenesis. Binds in vitro to phospholipids, including phosphatidylinositol 3-phosphate (PtdIns(3)P), phosphatidylinositol 4,5-bisphosphate (PtdIns(4,5)P2), phosphatidylinositol 4-phosphate (PtdIns(4)P) and phosphatidic acid (PA). Contrary to other profilin family members, does not bind to actin in vitro. This Mus musculus (Mouse) protein is Profilin-4 (Pfn4).